The following is a 449-amino-acid chain: Phosphoglucosamine mutase (449 aa).

Serine 104 (phosphoserine intermediate) is an active-site residue. Mg(2+) is bound by residues serine 104, aspartate 243, aspartate 245, and aspartate 247. Serine 104 carries the phosphoserine modification.

It belongs to the phosphohexose mutase family. It depends on Mg(2+) as a cofactor. Post-translationally, activated by phosphorylation.

It carries out the reaction alpha-D-glucosamine 1-phosphate = D-glucosamine 6-phosphate. Functionally, catalyzes the conversion of glucosamine-6-phosphate to glucosamine-1-phosphate. The sequence is that of Phosphoglucosamine mutase from Xanthomonas oryzae pv. oryzae (strain PXO99A).